A 98-amino-acid polypeptide reads, in one-letter code: Citrate lyase acyl carrier protein 1 (98 aa).

At serine 14 the chain carries O-(phosphoribosyl dephospho-coenzyme A)serine.

Belongs to the CitD family. In terms of assembly, oligomer with a subunit composition of (alpha,beta,gamma)6.

Its subcellular location is the cytoplasm. Its function is as follows. Covalent carrier of the coenzyme of citrate lyase. The polypeptide is Citrate lyase acyl carrier protein 1 (Salmonella paratyphi A (strain ATCC 9150 / SARB42)).